The primary structure comprises 278 residues: Urease accessory protein UreD (278 aa).

Belongs to the UreD family. UreD, UreF and UreG form a complex that acts as a GTP-hydrolysis-dependent molecular chaperone, activating the urease apoprotein by helping to assemble the nickel containing metallocenter of UreC. The UreE protein probably delivers the nickel.

The protein localises to the cytoplasm. Required for maturation of urease via the functional incorporation of the urease nickel metallocenter. This Deinococcus radiodurans (strain ATCC 13939 / DSM 20539 / JCM 16871 / CCUG 27074 / LMG 4051 / NBRC 15346 / NCIMB 9279 / VKM B-1422 / R1) protein is Urease accessory protein UreD.